We begin with the raw amino-acid sequence, 342 residues long: Isopentenyl-diphosphate delta-isomerase (342 aa).

Residue 11 to 12 (RK) coordinates substrate. FMN-binding positions include S68, 69 to 71 (SMT), S99, and N128. Residue 99–101 (SQR) participates in substrate binding. Position 162 (Q162) interacts with substrate. Mg(2+) is bound at residue E163. Residues K194, S219, T224, 275–277 (GVR), and 296–297 (AK) each bind FMN.

Belongs to the IPP isomerase type 2 family. As to quaternary structure, homooctamer. Dimer of tetramers. Requires FMN as cofactor. It depends on NADPH as a cofactor. Mg(2+) is required as a cofactor.

It is found in the cytoplasm. It carries out the reaction isopentenyl diphosphate = dimethylallyl diphosphate. Functionally, involved in the biosynthesis of isoprenoids. Catalyzes the 1,3-allylic rearrangement of the homoallylic substrate isopentenyl (IPP) to its allylic isomer, dimethylallyl diphosphate (DMAPP). The sequence is that of Isopentenyl-diphosphate delta-isomerase from Legionella pneumophila subsp. pneumophila (strain Philadelphia 1 / ATCC 33152 / DSM 7513).